The sequence spans 180 residues: Oligoribonuclease (180 aa).

One can recognise an Exonuclease domain in the interval 7–170 (LIWIDLEMTG…DDIRDSINEL (164 aa)). The active site involves tyrosine 128.

The protein belongs to the oligoribonuclease family.

It is found in the cytoplasm. 3'-to-5' exoribonuclease specific for small oligoribonucleotides. The chain is Oligoribonuclease from Marinobacter nauticus (strain ATCC 700491 / DSM 11845 / VT8) (Marinobacter aquaeolei).